We begin with the raw amino-acid sequence, 1732 residues long: MFFKGGSWLWLYIRTSIILGSELNSPAPHGQNNCYQLNRFQCSFEEAQHYCHVQRGFLAHIWNKEVQDLIRDYLEEGKKWWIGQNVMPLKKHQDNKYPADVAANGPPKPLSCTYLSRNFIRISSKGDKCLLKYYFICQTGDFLDGDAHYERNGNNSHLYQRHKKTKRGVAIARDKMPPGPGHLPTTCHYPLPAHLSKTLCHPISQFPSVLSSITSQVTSAASEPSSQPLPVITQLTMPVSVTHAGQSLAETTSSPKEEGHPNTFTSYLQVSLQKASGQVIDEIAGNFSRAVHGLQALNKLQEACEFLQKLTALTPRFSKPAQVNLINSLIYLSEELLRIPFQNNNSLGFKVPPTVCPFHSLNNVTKAGEGSWLESKRHTEPVEDILEMSLVEFGNIGEAFLEQNQSPESSVTLTSANATLLLSRQNISTLPLSSYTLGHPAPVRLGFPSALALKELLNKHPGVNVQITGLAFNPFKDLDNRNIVGSIGSVLLSANRKLLQVHDLMEDIEIMLWRNVSLETHPTSLNMSTHQLTITVNVTSLEKSLIVSIDPDSPLLMTLYLGFQYQPNCTHFHLNITLPKDKVWQKDEEYTWVLNPEHLQHGIGTYYITAVLSERQEGAQQTPSLVSVITAVTQCYYWEIHNQTWSSAGCQVGPQSTILRTQCLCNHLTFFASDFFVVPRTVNVEDTIKLFLRVTNNPVGVSLLASLLGFYVITVVWARKKDQADMQKVKVTVLADNDPSAQFHYLIQVYTGYRRSAATTAKVVITLYGSEGRSEPHHLCDPQKTVFERGGLDVFLLTTWTSLGNLHSLRLWHDNSGVSPSWYVSQVIVCDMAVKRKWHFLCNCWLAVDLGDCELDRVFIPVSKRELFSFRHLFSSMIVEKFTQDYLWLSIATRHPWNQFTRVQRLSCCMTLLLCNMVINVMFWKINSTTAKRDEQMRPFAVAWSELLVSIHTAVILFPINLVIGRLFPLIEPQETLPLFPPIQASCLSDASVEPLSATMVVEELKETVRFLLRRNTYLLSKCEQPPWSSWDITKLVKLLSSLVSSHLEGQGCHQQGERHWARVVPENHHHFCCYLHRVLQRLKSHLGTLGLTQGHQSCDFLDAASQLQKLQELLETHILPTEQEPSREVTSFAILSSEEGKKPISNGLSKWLTSVCWLLLGFTSLASAFFTALYSLELSKDQATSWMISIILSVLQNIFISQPVKVVFFTFLYSLMMSRMPRLNKENEQQTKRILALLAKCSSSVPGSRDKNNPVYVAPAINSPTKHPERTLKKKKLFKLTGDILVQILFLTLLMTAIYSAKNSNRFYLHQAIWKTFSHQFSEIKLLQDFYPWANHILLPSLYGDYRGKNAVLEPSHCKCGVQLIFQIPRTKTYEKVDEGQLAFCDNGHTCGRPKSLFPGLHLRRFSYICSPRPMVLIPTDELHERLTSKNENGFSYIMRGAFFTSLRLESFTSLQMSKKGCVWSIISQVIYYLLVCYYAFIQGCQLKQQKWRFFTGKRNILDTSIILISFILLGLDMKSISLHKKNMARYRDDQDRFISFYEAVKVNSAATHLVGFPVLLATVQLWNLLRHSPRLRVISRTLSRAWDEVVGFLLIILILLTGYAIAFNLLFGCSISDYRTFFSSAVTVVGLLMGISHQEEVFALDPVLGTFLILTSVILMVLVVINLFVSAILMAFGKERKSLKKEAALIDTLLQKLSNLLGISWPQKTSSEQAATTAVGSDTEVLDELP.

An N-terminal signal peptide occupies residues 1–23 (MFFKGGSWLWLYIRTSIILGSEL). Residues 24–697 (NSPAPHGQNN…IKLFLRVTNN (674 aa)) are Extracellular-facing. In terms of domain architecture, C-type lectin spans 30–138 (GQNNCYQLNR…CLLKYYFICQ (109 aa)). 2 disulfide bridges follow: C51–C137 and C112–C129. N-linked (GlcNAc...) asparagine glycans are attached at residues N286, N363, N515, N537, and N575. Positions 523-685 (TSLNMSTHQL…FVVPRTVNVE (163 aa)) constitute a GAIN-B domain. 2 cysteine pairs are disulfide-bonded: C635–C663 and C650–C665. A GPS region spans residues 635–685 (CYYWEIHNQTWSSAGCQVGPQSTILRTQCLCNHLTFFASDFFVVPRTVNVE). The helical transmembrane segment at 698–718 (PVGVSLLASLLGFYVITVVWA) threads the bilayer. The Cytoplasmic segment spans residues 719 to 905 (RKKDQADMQK…PWNQFTRVQR (187 aa)). A PLAT domain is found at 743-860 (FHYLIQVYTG…GDCELDRVFI (118 aa)). The helical transmembrane segment at 906–926 (LSCCMTLLLCNMVINVMFWKI) threads the bilayer. At 927–939 (NSTTAKRDEQMRP) the chain is on the extracellular side. The chain crosses the membrane as a helical span at residues 940–960 (FAVAWSELLVSIHTAVILFPI). At 961-1154 (NLVIGRLFPL…ISNGLSKWLT (194 aa)) the chain is on the cytoplasmic side. Residues 1155 to 1175 (SVCWLLLGFTSLASAFFTALY) form a helical membrane-spanning segment. Over 1176–1198 (SLELSKDQATSWMISIILSVLQN) the chain is Extracellular. The helical transmembrane segment at 1199–1219 (IFISQPVKVVFFTFLYSLMMS) threads the bilayer. Residues 1220–1289 (RMPRLNKENE…KLTGDILVQI (70 aa)) are Cytoplasmic-facing. A helical transmembrane segment spans residues 1290 to 1300 (LFLTLLMTAIY). The Extracellular segment spans residues 1301 to 1461 (SAKNSNRFYL…SFTSLQMSKK (161 aa)). A helical membrane pass occupies residues 1462–1491 (GCVWSIISQVIYYLLVCYYAFIQGCQLKQQ). The Cytoplasmic segment spans residues 1492–1500 (KWRFFTGKR). A helical transmembrane segment spans residues 1501–1519 (NILDTSIILISFILLGLDM). Topologically, residues 1520-1550 (KSISLHKKNMARYRDDQDRFISFYEAVKVNS) are extracellular. The chain crosses the membrane as a helical span at residues 1551–1572 (AATHLVGFPVLLATVQLWNLLR). Residues 1573-1589 (HSPRLRVISRTLSRAWD) are Cytoplasmic-facing. The chain crosses the membrane as a helical span at residues 1590-1614 (EVVGFLLIILILLTGYAIAFNLLFG). The tract at residues 1613-1651 (FGCSISDYRTFFSSAVTVVGLLMGISHQEEVFALDPVLG) is channel pore-region. Topologically, residues 1615–1647 (CSISDYRTFFSSAVTVVGLLMGISHQEEVFALD) are extracellular. Residues 1648–1667 (PVLGTFLILTSVILMVLVVI) traverse the membrane as a helical segment. The Cytoplasmic segment spans residues 1668 to 1732 (NLFVSAILMA…SDTEVLDELP (65 aa)).

This sequence belongs to the polycystin family. In terms of assembly, heterotetramer with PKD2L1, composed of 3 subunit of PKD2L1 and 1 subunit of PKD1L3. In terms of processing, autoproteolytically processed at the GPS region of the GAIN-B domain; this cleavage modulates receptor activity. Highly expressed in placenta, weakly in heart and lung.

The protein resides in the cell membrane. It catalyses the reaction Ca(2+)(in) = Ca(2+)(out). The catalysed reaction is Na(+)(in) = Na(+)(out). The enzyme catalyses K(+)(in) = K(+)(out). It carries out the reaction Mg(2+)(in) = Mg(2+)(out). Its activity is regulated as follows. The non-selective cation channel is gated following an off-response property by acid: gated open after the removal of acid stimulus, but not during acid application. Regulation of non-selective cation channel activity by external Ca(2+) is bimodal, first sensitizing and subsequently inactivating the current. Its function is as follows. Pore-forming subunit of a heterotetrameric, non-selective cation channel that is permeable to Ca(2+). Also shows permeability towards NA(1+), K(+) and Mg(2+). Heterotetrameric complex channel is activated by external low pH and Ca(2+), but opens only when the extracellular pH rises again and after the removal of acid stimulus. May act as a sour taste receptor in gustatory cells; however, its contribution to sour taste perception is unclear in vivo and may be indirect. This chain is Polycystin-1-like protein 3, found in Homo sapiens (Human).